Reading from the N-terminus, the 74-residue chain is Antitoxin VapB39 (74 aa).

Its function is as follows. Antitoxin component of a type II toxin-antitoxin (TA) system. The polypeptide is Antitoxin VapB39 (vapB39) (Mycobacterium tuberculosis (strain CDC 1551 / Oshkosh)).